The following is a 235-amino-acid chain: Glucosamine-6-phosphate deaminase (235 aa).

Residue Asp-62 is the Proton acceptor; for enolization step of the active site. The For ring-opening step role is filled by Asn-128. Catalysis depends on His-130, which acts as the Proton acceptor; for ring-opening step. The For ring-opening step role is filled by Glu-135.

The protein belongs to the glucosamine/galactosamine-6-phosphate isomerase family. NagB subfamily.

The catalysed reaction is alpha-D-glucosamine 6-phosphate + H2O = beta-D-fructose 6-phosphate + NH4(+). It functions in the pathway amino-sugar metabolism; N-acetylneuraminate degradation; D-fructose 6-phosphate from N-acetylneuraminate: step 5/5. In terms of biological role, catalyzes the reversible isomerization-deamination of glucosamine 6-phosphate (GlcN6P) to form fructose 6-phosphate (Fru6P) and ammonium ion. The chain is Glucosamine-6-phosphate deaminase from Lactococcus lactis subsp. lactis (strain IL1403) (Streptococcus lactis).